The sequence spans 658 residues: Threonine--tRNA ligase (658 aa).

Residues 1–64 (MSNTVSLQFP…GASGKVEIIT (64 aa)) form the TGS domain. The tract at residues 246–548 (DHRRLGREMD…LIENFAGHMP (303 aa)) is catalytic. Zn(2+) contacts are provided by Cys343, His394, and His525.

It belongs to the class-II aminoacyl-tRNA synthetase family. Homodimer. The cofactor is Zn(2+).

It localises to the cytoplasm. The enzyme catalyses tRNA(Thr) + L-threonine + ATP = L-threonyl-tRNA(Thr) + AMP + diphosphate + H(+). Its function is as follows. Catalyzes the attachment of threonine to tRNA(Thr) in a two-step reaction: L-threonine is first activated by ATP to form Thr-AMP and then transferred to the acceptor end of tRNA(Thr). Also edits incorrectly charged L-seryl-tRNA(Thr). The chain is Threonine--tRNA ligase from Brucella canis (strain ATCC 23365 / NCTC 10854 / RM-666).